A 168-amino-acid chain; its full sequence is Ribulose bisphosphate carboxylase small subunit, chloroplastic (168 aa).

Residues 1 to 28 constitute a chloroplast transit peptide; sequence MASIAAKSVSLRAATRRAAPVAAPADAR.

It belongs to the RuBisCO small chain family. In terms of assembly, heterohexadecamer of 8 large and 8 small subunits.

Its subcellular location is the plastid. The protein localises to the chloroplast. Its function is as follows. RuBisCO catalyzes two reactions: the carboxylation of D-ribulose 1,5-bisphosphate, the primary event in carbon dioxide fixation, as well as the oxidative fragmentation of the pentose substrate. Both reactions occur simultaneously and in competition at the same active site. Although the small subunit is not catalytic it is essential for maximal activity. The polypeptide is Ribulose bisphosphate carboxylase small subunit, chloroplastic (Chlamydomonas moewusii (Chlamydomonas eugametos)).